A 102-amino-acid polypeptide reads, in one-letter code: Large ribosomal subunit protein bL21 (102 aa).

Residues 80 to 91 show a composition bias toward basic residues; it reads KNSKRKKGHRQP. The tract at residues 80-102 is disordered; sequence KNSKRKKGHRQPYTKLTIDKINA.

It belongs to the bacterial ribosomal protein bL21 family. As to quaternary structure, part of the 50S ribosomal subunit. Contacts protein L20.

This protein binds to 23S rRNA in the presence of protein L20. The sequence is that of Large ribosomal subunit protein bL21 from Staphylococcus aureus (strain Mu3 / ATCC 700698).